Reading from the N-terminus, the 293-residue chain is GTP cyclohydrolase FolE2 (293 aa).

Belongs to the GTP cyclohydrolase IV family.

The enzyme catalyses GTP + H2O = 7,8-dihydroneopterin 3'-triphosphate + formate + H(+). It functions in the pathway cofactor biosynthesis; 7,8-dihydroneopterin triphosphate biosynthesis; 7,8-dihydroneopterin triphosphate from GTP: step 1/1. Its function is as follows. Converts GTP to 7,8-dihydroneopterin triphosphate. The sequence is that of GTP cyclohydrolase FolE2 from Pseudomonas entomophila (strain L48).